A 228-amino-acid polypeptide reads, in one-letter code: Octanoyltransferase (228 aa).

Residues 30–213 enclose the BPL/LPL catalytic domain; that stretch reads NKVEDIMLLL…YFSRVFDFEP (184 aa). Substrate contacts are provided by residues 75 to 82, 143 to 145, and 156 to 158; these read RGGDVTYH, AIG, and GFA. Catalysis depends on cysteine 174, which acts as the Acyl-thioester intermediate.

This sequence belongs to the LipB family.

It localises to the cytoplasm. The enzyme catalyses octanoyl-[ACP] + L-lysyl-[protein] = N(6)-octanoyl-L-lysyl-[protein] + holo-[ACP] + H(+). Its pathway is protein modification; protein lipoylation via endogenous pathway; protein N(6)-(lipoyl)lysine from octanoyl-[acyl-carrier-protein]: step 1/2. Its function is as follows. Catalyzes the transfer of endogenously produced octanoic acid from octanoyl-acyl-carrier-protein onto the lipoyl domains of lipoate-dependent enzymes. Lipoyl-ACP can also act as a substrate although octanoyl-ACP is likely to be the physiological substrate. The chain is Octanoyltransferase from Desulforamulus reducens (strain ATCC BAA-1160 / DSM 100696 / MI-1) (Desulfotomaculum reducens).